The primary structure comprises 364 residues: Fructose-bisphosphate aldolase C-A (364 aa).

Arg56 and Lys147 together coordinate substrate. The active-site Proton acceptor is the Glu188. Lys230 (schiff-base intermediate with dihydroxyacetone-P) is an active-site residue.

This sequence belongs to the class I fructose-bisphosphate aldolase family. As to quaternary structure, homotetramer. As to expression, expressed specifically in Purkinje cells in the brain.

The enzyme catalyses beta-D-fructose 1,6-bisphosphate = D-glyceraldehyde 3-phosphate + dihydroxyacetone phosphate. It participates in carbohydrate degradation; glycolysis; D-glyceraldehyde 3-phosphate and glycerone phosphate from D-glucose: step 4/4. The protein is Fructose-bisphosphate aldolase C-A of Danio rerio (Zebrafish).